Reading from the N-terminus, the 156-residue chain is Transcriptional repressor NrdR (156 aa).

The segment at 3–34 (CPFCGSMDTRVLDSRPTLDGTAIRRRRECSSC) is a zinc-finger region. Residues 49–139 (VLVVKKDGRR…VYRDFREVDQ (91 aa)) enclose the ATP-cone domain.

The protein belongs to the NrdR family. Requires Zn(2+) as cofactor.

In terms of biological role, negatively regulates transcription of bacterial ribonucleotide reductase nrd genes and operons by binding to NrdR-boxes. The polypeptide is Transcriptional repressor NrdR (Thermotoga maritima (strain ATCC 43589 / DSM 3109 / JCM 10099 / NBRC 100826 / MSB8)).